A 123-amino-acid polypeptide reads, in one-letter code: Cholecystokinin A (123 aa).

Residues Met1–Ala20 form the signal peptide. A propeptide spanning residues His21–Arg103 is cleaved from the precursor. The residue at position 105 (Tyr105) is a Sulfotyrosine. Position 111 is a phenylalanine amide (Phe111). Positions Ser115 to Ser123 are excised as a propeptide.

Belongs to the gastrin/cholecystokinin family. Post-translationally, the precursor is cleaved by proteases to produce a number of active cholecystokinins. Brain, gastrointestinal tract and lung.

The protein resides in the secreted. This chain is Cholecystokinin A (cck-a), found in Xenopus laevis (African clawed frog).